Consider the following 165-residue polypeptide: Short form salivary protein D7R1 (165 aa).

Residues 1–21 (MFNKLHLVSLLACGLFVIAQA) form the signal peptide. 3 disulfide bridges follow: Cys-27–Cys-59, Cys-40–Cys-164, and Cys-98–Cys-117. Serotonin-binding residues include Glu-28, His-56, Tyr-115, Asp-132, and Glu-135. Positions 115, 132, and 135 each coordinate histamine.

This sequence belongs to the PBP/GOBP family. Female salivary gland. Not detected in female carcass without salivary glands. Not detected in male tissues.

Its subcellular location is the secreted. Its function is as follows. Modulates blood feeding of female mosquitoes on vertebrate species by binding and sequestering different mediators involved in the host response. Binds serotonin and histamine. Increases blood clotting time. This chain is Short form salivary protein D7R1, found in Anopheles gambiae (African malaria mosquito).